The primary structure comprises 204 residues: Tumor necrosis factor receptor superfamily member 26 (204 aa).

Residues Met1–Cys19 form the signal peptide. At Ser20–Leu164 the chain is on the extracellular side. 9 disulfide bridges follow: Cys27–Cys38, Cys39–Cys52, Cys42–Cys61, Cys64–Cys79, Cys82–Cys95, Cys85–Cys103, Cys105–Cys120, Cys123–Cys135, and Cys126–Cys143. TNFR-Cys repeat units lie at residues Cys27 to Cys61, Pro63 to Cys103, and Gln104 to Cys143. Asn57 is a glycosylation site (N-linked (GlcNAc...) asparagine). Asn136 carries an N-linked (GlcNAc...) asparagine glycan. Residues Gly165–Leu185 form a helical membrane-spanning segment. At Lys186–Leu204 the chain is on the cytoplasmic side.

Expressed in thymus and spleen. Detectable levels in lung.

It is found in the membrane. This Mus musculus (Mouse) protein is Tumor necrosis factor receptor superfamily member 26 (Tnfrsf26).